Reading from the N-terminus, the 260-residue chain is MIETYSQTAPRSVAPGPPVSMKIFMYLLTVFLITQMIGSALFAVYLHRRLDKIEDERNLYEDFVFMKTLQKCNKGEGALSLLNCEEIKSRFEAFLKEIMLNKETKKEKNVAMQKGDQDPRVAAHVISEASSSTASVLQWAPKGYYTISSNLVTLENGKQLAVKRQGLYYIYAQVTFCSNREASSQAPFIASLCLHSPSGSERVLLRAANARSSSKPCGQQSIHLGGVFELHPGASVFVNVTDPSQVSHGTGFTSFGLLKL.

Residues 1 to 22 (MIETYSQTAPRSVAPGPPVSMK) are Cytoplasmic-facing. The helical; Signal-anchor for type II membrane protein transmembrane segment at 23–46 (IFMYLLTVFLITQMIGSALFAVYL) threads the bilayer. Over 47–260 (HRRLDKIEDE…GFTSFGLLKL (214 aa)) the chain is Extracellular. A THD domain is found at 121 to 260 (VAAHVISEAS…GFTSFGLLKL (140 aa)). Cys177 and Cys217 are oxidised to a cystine. N-linked (GlcNAc...) asparagine glycosylation is present at Asn239.

Belongs to the tumor necrosis factor family. As to quaternary structure, homotrimer. Interacts with CD28. CD40 ligand, soluble form: Exists as either a monomer or a homotrimer. Forms a ternary complex between CD40 and integrins for CD40-CD40LG signaling. Post-translationally, the soluble form derives from the membrane form by proteolytic processing.

The protein localises to the cell membrane. The protein resides in the cell surface. It localises to the secreted. Functionally, cytokine that acts as a ligand to CD40/TNFRSF5. Costimulates T-cell proliferation and cytokine production. Its cross-linking on T-cells generates a costimulatory signal which enhances the production of IL4 and IL10 in conjunction with the TCR/CD3 ligation and CD28 costimulation. Induces the activation of NF-kappa-B. Induces the activation of kinases MAPK8 and PAK2 in T-cells. Mediates B-cell proliferation in the absence of co-stimulus as well as IgE production in the presence of IL4. Involved in immunoglobulin class switching. Its function is as follows. Acts as a ligand for integrins, specifically ITGA5:ITGB1 and ITGAV:ITGB3; both integrins and the CD40 receptor are required for activation of CD40-CD40LG signaling, which have cell-type dependent effects, such as B-cell activation, NF-kappa-B signaling and anti-apoptotic signaling. In Felis catus (Cat), this protein is CD40 ligand (CD40LG).